A 423-amino-acid chain; its full sequence is UDP-N-acetylglucosamine 1-carboxyvinyltransferase (423 aa).

Residue 22-23 (KN) participates in phosphoenolpyruvate binding. Arg-98 contributes to the UDP-N-acetyl-alpha-D-glucosamine binding site. The active-site Proton donor is the Cys-122. The residue at position 122 (Cys-122) is a 2-(S-cysteinyl)pyruvic acid O-phosphothioketal. UDP-N-acetyl-alpha-D-glucosamine is bound by residues 127–131 (RPVDQ), Asp-311, and Ile-333.

It belongs to the EPSP synthase family. MurA subfamily.

The protein localises to the cytoplasm. It catalyses the reaction phosphoenolpyruvate + UDP-N-acetyl-alpha-D-glucosamine = UDP-N-acetyl-3-O-(1-carboxyvinyl)-alpha-D-glucosamine + phosphate. It participates in cell wall biogenesis; peptidoglycan biosynthesis. Cell wall formation. Adds enolpyruvyl to UDP-N-acetylglucosamine. The polypeptide is UDP-N-acetylglucosamine 1-carboxyvinyltransferase (Stenotrophomonas maltophilia (strain K279a)).